The sequence spans 362 residues: 3-isopropylmalate dehydrogenase (362 aa).

Position 78–91 (78–91) interacts with NAD(+); it reads GPKWEHLAPNDQPE. Residues Arg99, Arg109, Arg138, and Asp227 each coordinate substrate. Mg(2+)-binding residues include Asp227, Asp251, and Asp255. Residue 285-297 participates in NAD(+) binding; sequence GSAPDIAGKNIAN.

Belongs to the isocitrate and isopropylmalate dehydrogenases family. LeuB type 1 subfamily. As to quaternary structure, homodimer. It depends on Mg(2+) as a cofactor. Requires Mn(2+) as cofactor.

Its subcellular location is the cytoplasm. The catalysed reaction is (2R,3S)-3-isopropylmalate + NAD(+) = 4-methyl-2-oxopentanoate + CO2 + NADH. Its pathway is amino-acid biosynthesis; L-leucine biosynthesis; L-leucine from 3-methyl-2-oxobutanoate: step 3/4. Catalyzes the oxidation of 3-carboxy-2-hydroxy-4-methylpentanoate (3-isopropylmalate) to 3-carboxy-4-methyl-2-oxopentanoate. The product decarboxylates to 4-methyl-2 oxopentanoate. The sequence is that of 3-isopropylmalate dehydrogenase from Photobacterium profundum (strain SS9).